A 765-amino-acid polypeptide reads, in one-letter code: LPS-assembly protein LptD (765 aa).

Positions Met1–Ala18 are cleaved as a signal peptide.

It belongs to the LptD family. Component of the lipopolysaccharide transport and assembly complex. Interacts with LptE and LptA.

The protein resides in the cell outer membrane. In terms of biological role, together with LptE, is involved in the assembly of lipopolysaccharide (LPS) at the surface of the outer membrane. This chain is LPS-assembly protein LptD, found in Shewanella sp. (strain MR-4).